Here is a 651-residue protein sequence, read N- to C-terminus: Probable potassium transport system protein Kup (651 aa).

12 consecutive transmembrane segments (helical) span residues 41 to 61, 82 to 102, 130 to 150, 163 to 183, 194 to 214, 235 to 255, 276 to 296, 309 to 329, 366 to 386, 395 to 415, 426 to 446, and 450 to 470; these read LVLGALGVVYGDIGTSPIYAF, VVSLIFWALTLVVTVKYVLFV, LILGVGICGAALFFGDAVITP, IVAPNLTPFVVPATVVILVTL, VAIVFGPIMALWFVALGASGL, FLTVSPAVAFVTVGAVFLAMT, WLWIVFPCLLLNYFGQAAFIL, MIPSFALWPMVLLATAATVIA, IYIPRVNLLLGLAVVILVLGF, AYGIAVTGNMLVTTVLLYIVM, ALPIILGFLVIDMLFFSANII, and EGGWASIGIATVLVLIMWTWV.

It belongs to the HAK/KUP transporter (TC 2.A.72) family.

Its subcellular location is the cell inner membrane. The enzyme catalyses K(+)(in) + H(+)(in) = K(+)(out) + H(+)(out). Functionally, transport of potassium into the cell. Likely operates as a K(+):H(+) symporter. This is Probable potassium transport system protein Kup from Brucella suis (strain ATCC 23445 / NCTC 10510).